The sequence spans 229 residues: Potassium/proton antiporter CemA (229 aa).

3 helical membrane passes run 6-26 (AFIP…ISLC), 107-127 (ILHF…SFWG), and 189-209 (ILSG…KYWI).

The protein belongs to the CemA family.

It localises to the plastid. Its subcellular location is the chloroplast inner membrane. The enzyme catalyses K(+)(in) + H(+)(out) = K(+)(out) + H(+)(in). In terms of biological role, contributes to K(+)/H(+) antiport activity by supporting proton efflux to control proton extrusion and homeostasis in chloroplasts in a light-dependent manner to modulate photosynthesis. Prevents excessive induction of non-photochemical quenching (NPQ) under continuous-light conditions. Indirectly promotes efficient inorganic carbon uptake into chloroplasts. This is Potassium/proton antiporter CemA from Arabis hirsuta (Hairy rock-cress).